The following is a 233-amino-acid chain: Zinc import ATP-binding protein ZnuC (233 aa).

Residues 6 to 222 (IEFRNVSKKF…SEFSNALSAL (217 aa)) enclose the ABC transporter domain. 38–45 (GPNGAGKT) is an ATP binding site.

It belongs to the ABC transporter superfamily. Zinc importer (TC 3.A.1.15.5) family. The complex is composed of two ATP-binding proteins (ZnuC), two transmembrane proteins (ZnuB) and a solute-binding protein (ZnuA).

It is found in the cell inner membrane. The enzyme catalyses Zn(2+)(out) + ATP(in) + H2O(in) = Zn(2+)(in) + ADP(in) + phosphate(in) + H(+)(in). In terms of biological role, part of the ABC transporter complex ZnuABC involved in zinc import. Responsible for energy coupling to the transport system. This chain is Zinc import ATP-binding protein ZnuC, found in Rickettsia conorii (strain ATCC VR-613 / Malish 7).